Here is a 1034-residue protein sequence, read N- to C-terminus: DNA polymerase I B, chloroplastic/mitochondrial (1034 aa).

The N-terminal 55 residues, 1-55 (MGVSLRHLSPSSFWVSRRPRVSSSILSFLVPRRRILCTRKVAIIKGNAGYSTATD), are a transit peptide targeting the chloroplast and mitochondrion. Positions 270 to 468 (ACDTEVSRID…LYESMKKQLQ (199 aa)) constitute a 3'-5' exonuclease domain. A polymerase region spans residues 700-1030 (HAIAALCEVC…SVDAKCAQNW (331 aa)).

The protein belongs to the DNA polymerase type-A family. Expressed in shoot apical meristem.

Its subcellular location is the mitochondrion. The protein resides in the plastid. The protein localises to the chloroplast. The enzyme catalyses DNA(n) + a 2'-deoxyribonucleoside 5'-triphosphate = DNA(n+1) + diphosphate. With respect to regulation, not inhibited by aphidicolin. In terms of biological role, in addition to polymerase activity, this DNA polymerase exhibits 5'-3' exonuclease activity. Required for DNA replication and accumulation in plastids and mitochondria. The protein is DNA polymerase I B, chloroplastic/mitochondrial (POLIB) of Arabidopsis thaliana (Mouse-ear cress).